A 160-amino-acid polypeptide reads, in one-letter code: Cytochrome b6-f complex subunit 4 (160 aa).

3 consecutive transmembrane segments (helical) span residues 36-56 (LLYM…GLSV), 95-115 (LLGV…PFIE), and 131-151 (ILFL…TFPI).

Belongs to the cytochrome b family. PetD subfamily. The 4 large subunits of the cytochrome b6-f complex are cytochrome b6, subunit IV (17 kDa polypeptide, petD), cytochrome f and the Rieske protein, while the 4 small subunits are petG, petL, petM and petN. The complex functions as a dimer. The N-terminus is blocked.

The protein resides in the plastid. It localises to the chloroplast thylakoid membrane. Component of the cytochrome b6-f complex, which mediates electron transfer between photosystem II (PSII) and photosystem I (PSI), cyclic electron flow around PSI, and state transitions. The chain is Cytochrome b6-f complex subunit 4 from Chlamydomonas reinhardtii (Chlamydomonas smithii).